The sequence spans 694 residues: Elongation factor G (694 aa).

Residues 6-288 enclose the tr-type G domain; the sequence is KLYRNIGIAA…GVIEYLPSPT (283 aa). Residues 15-22, 86-90, and 140-143 contribute to the GTP site; these read AHVDAGKT, DTPGH, and NKMD.

This sequence belongs to the TRAFAC class translation factor GTPase superfamily. Classic translation factor GTPase family. EF-G/EF-2 subfamily.

The protein localises to the cytoplasm. Catalyzes the GTP-dependent ribosomal translocation step during translation elongation. During this step, the ribosome changes from the pre-translocational (PRE) to the post-translocational (POST) state as the newly formed A-site-bound peptidyl-tRNA and P-site-bound deacylated tRNA move to the P and E sites, respectively. Catalyzes the coordinated movement of the two tRNA molecules, the mRNA and conformational changes in the ribosome. The protein is Elongation factor G of Legionella pneumophila (strain Corby).